Consider the following 138-residue polypeptide: Putative pre-16S rRNA nuclease (138 aa).

It belongs to the YqgF nuclease family.

The protein localises to the cytoplasm. Could be a nuclease involved in processing of the 5'-end of pre-16S rRNA. The polypeptide is Putative pre-16S rRNA nuclease (Clostridium beijerinckii (strain ATCC 51743 / NCIMB 8052) (Clostridium acetobutylicum)).